We begin with the raw amino-acid sequence, 443 residues long: Phosphoribosylamine--glycine ligase (443 aa).

The ATP-grasp domain maps to 109–324 (RNLFKKYNIK…FLDVCFGISN (216 aa)). 140 to 202 (MTGLGKDVVV…EEKLVGVEFT (63 aa)) serves as a coordination point for ATP. Gln282, Glu294, and Asn296 together coordinate Mg(2+). 3 residues coordinate Mn(2+): Gln282, Glu294, and Asn296.

It belongs to the GARS family. Mg(2+) is required as a cofactor. The cofactor is Mn(2+).

The enzyme catalyses 5-phospho-beta-D-ribosylamine + glycine + ATP = N(1)-(5-phospho-beta-D-ribosyl)glycinamide + ADP + phosphate + H(+). It functions in the pathway purine metabolism; IMP biosynthesis via de novo pathway; N(1)-(5-phospho-D-ribosyl)glycinamide from 5-phospho-alpha-D-ribose 1-diphosphate: step 2/2. The polypeptide is Phosphoribosylamine--glycine ligase (Methanococcus vannielii (strain ATCC 35089 / DSM 1224 / JCM 13029 / OCM 148 / SB)).